The chain runs to 334 residues: rRNA 2'-O-methyltransferase fibrillarin (334 aa).

The segment covering M1–P93 has biased composition (gly residues). The disordered stretch occupies residues M1–G94. S-adenosyl-L-methionine-binding positions include T184–T185, E203–L204, D228–A229, and D248–Q251.

The protein belongs to the methyltransferase superfamily. Fibrillarin family. As to quaternary structure, component of box C/D small nucleolar ribonucleoprotein (snoRNP) particles. It is associated with the U3, U8 and U13 small nuclear RNAs. Part of the small subunit (SSU) processome, composed of more than 70 proteins and the RNA chaperone small nucleolar RNA (snoRNA) U3. Post-translationally, by homology to other fibrillarins, some or all of the N-terminal domain arginines are modified to asymmetric dimethylarginine (DMA).

Its subcellular location is the nucleus. It localises to the nucleolus. It carries out the reaction L-glutaminyl-[histone H2A] + S-adenosyl-L-methionine = N(5)-methyl-L-glutaminyl-[histone H2A] + S-adenosyl-L-homocysteine + H(+). Its function is as follows. S-adenosyl-L-methionine-dependent methyltransferase that has the ability to methylate both RNAs and proteins. Involved in pre-rRNA processing. Utilizes the methyl donor S-adenosyl-L-methionine to catalyze the site-specific 2'-hydroxyl methylation of ribose moieties in pre-ribosomal RNA. Site specificity is provided by a guide RNA that base pairs with the substrate. Methylation occurs at a characteristic distance from the sequence involved in base pairing with the guide RNA. Also acts as a protein methyltransferase by mediating methylation of 'Gln-105' of histone H2A (H2AQ105me), a modification that impairs binding of the FACT complex and is specifically present at 35S ribosomal DNA locus. Part of the small subunit (SSU) processome, first precursor of the small eukaryotic ribosomal subunit. During the assembly of the SSU processome in the nucleolus, many ribosome biogenesis factors, an RNA chaperone and ribosomal proteins associate with the nascent pre-rRNA and work in concert to generate RNA folding, modifications, rearrangements and cleavage as well as targeted degradation of pre-ribosomal RNA by the RNA exosome. In Dictyostelium discoideum (Social amoeba), this protein is rRNA 2'-O-methyltransferase fibrillarin (fbl).